The sequence spans 179 residues: ATP synthase subunit delta (179 aa).

It belongs to the ATPase delta chain family. F-type ATPases have 2 components, F(1) - the catalytic core - and F(0) - the membrane proton channel. F(1) has five subunits: alpha(3), beta(3), gamma(1), delta(1), epsilon(1). F(0) has three main subunits: a(1), b(2) and c(10-14). The alpha and beta chains form an alternating ring which encloses part of the gamma chain. F(1) is attached to F(0) by a central stalk formed by the gamma and epsilon chains, while a peripheral stalk is formed by the delta and b chains.

It localises to the cell inner membrane. F(1)F(0) ATP synthase produces ATP from ADP in the presence of a proton or sodium gradient. F-type ATPases consist of two structural domains, F(1) containing the extramembraneous catalytic core and F(0) containing the membrane proton channel, linked together by a central stalk and a peripheral stalk. During catalysis, ATP synthesis in the catalytic domain of F(1) is coupled via a rotary mechanism of the central stalk subunits to proton translocation. Functionally, this protein is part of the stalk that links CF(0) to CF(1). It either transmits conformational changes from CF(0) to CF(1) or is implicated in proton conduction. The protein is ATP synthase subunit delta of Anaeromyxobacter dehalogenans (strain 2CP-1 / ATCC BAA-258).